We begin with the raw amino-acid sequence, 513 residues long: Putative ATP-dependent RNA helicase QP509L (513 aa).

Residues 110 to 262 form the Helicase ATP-binding domain; sequence KKLLSPYGRF…KIIIHHLGQP (153 aa). 123-130 is a binding site for ATP; sequence LNTGLGKT. The DEAH box motif lies at 215 to 218; that stretch reads DEAH.

Belongs to the DEAD box helicase family. DEAH subfamily.

The enzyme catalyses ATP + H2O = ADP + phosphate + H(+). The protein is Putative ATP-dependent RNA helicase QP509L of African swine fever virus (isolate Tick/South Africa/Pretoriuskop Pr4/1996) (ASFV).